Here is a 160-residue protein sequence, read N- to C-terminus: Small ribosomal subunit protein uS7 (160 aa).

The protein belongs to the universal ribosomal protein uS7 family. In terms of assembly, part of the 30S ribosomal subunit. Contacts proteins S9 and S11.

In terms of biological role, one of the primary rRNA binding proteins, it binds directly to 16S rRNA where it nucleates assembly of the head domain of the 30S subunit. Is located at the subunit interface close to the decoding center, probably blocks exit of the E-site tRNA. The polypeptide is Small ribosomal subunit protein uS7 (Anaplasma phagocytophilum (strain HZ)).